Consider the following 119-residue polypeptide: MSTYTFVLFCLQICLIQNVYSQCLGRVGPGGPPVGPYGGPLGGPGYGPVGYGGCGGYGGSGIGNVAVAGELPVAGSSAVMGQVPVIGAVEFAGPACAVGSVSISGACGPTCGCGGSPYY.

Positions 1–21 are cleaved as a signal peptide; it reads MSTYTFVLFCLQICLIQNVYS. The segment at 22 to 55 is left arm; sequence QCLGRVGPGGPPVGPYGGPLGGPGYGPVGYGGCG. The interval 56-103 is central domain; it reads GYGGSGIGNVAVAGELPVAGSSAVMGQVPVIGAVEFAGPACAVGSVSI. Residues 104–119 are right arm; it reads SGACGPTCGCGGSPYY.

This sequence belongs to the chorion protein family.

Its function is as follows. This protein is one of many from the eggshell of the silk moth. This Bombyx mori (Silk moth) protein is Chorion class CA protein ERA.5 (ERA.5).